The chain runs to 1190 residues: Plakophilin-4 (1190 aa).

The segment at 1–32 is disordered; sequence MPAPEQGSLVEEGQPQTHQEAVSTGPGMEPET. Residues 36–63 are a coiled coil; sequence TILASVKEQELQFQRLTRELEVERQIVA. Positions 73–347 are disordered; the sequence is AESPSIASTS…KRSGMTAVPQ (275 aa). Ser75 bears the Phosphoserine mark. The segment covering 77 to 86 has biased composition (polar residues); sequence SIASTSSTEK. The residue at position 84 (Thr84) is a Phosphothreonine. Phosphoserine occurs at positions 106, 132, 136, and 139. 3 stretches are compositionally biased toward polar residues: residues 138–156, 163–203, and 213–229; these read GSLG…SDSG, FHNS…QPSV, and SVPS…STGV. Phosphoserine occurs at positions 220, 230, and 235. A compositionally biased stretch (low complexity) spans 230-241; sequence SPSRGSLRTSLG. The span at 247–266 shows a compositional bias: polar residues; sequence PSVTDSRPLNPSAYSSSTLP. Omega-N-methylarginine occurs at positions 253 and 269. Residues Ser272, Ser280, Ser313, Ser326, and Ser336 each carry the phosphoserine modification. Over residues 289–323 the composition is skewed to polar residues; sequence SVTSRQTSNPNGPVPQYQTTTRVGSPLTLTDAQTR. The span at 324–337 shows a compositional bias: low complexity; the sequence is VASPSQGQVGSSSP. Tyr371 carries the phosphotyrosine modification. Phosphoserine is present on residues Ser391, Ser402, and Ser405. Thr411 bears the Phosphothreonine mark. Tyr414 is modified (phosphotyrosine). Phosphoserine occurs at positions 421, 426, and 437. Tyr477 is modified (phosphotyrosine). A phosphoserine mark is found at Ser509, Ser511, and Ser514. ARM repeat units lie at residues 517–556, 559–598, and 603–643; these read KDPR…HLCF, NKVK…NLVF, and DENK…NLSS. Positions 772–781 are enriched in basic and acidic residues; that stretch reads GKESPSKDSE. The interval 772–809 is disordered; it reads GKESPSKDSEPSCWGKKKKKKKRTPQEDQWDGVGPIPG. Ser775 is subject to Phosphoserine. The stretch at 861 to 900 is one ARM 4 repeat; sequence AYIRAAVRKEKGLPILVELLRMDNDRVVSSVATALRNMAL. Phosphothreonine is present on residues Thr1012 and Thr1016. Phosphoserine is present on residues Ser1044, Ser1090, Ser1099, and Ser1133.

It belongs to the beta-catenin family. Interacts (via the C-terminus) with FRMPD2 (via the PDZ 2 domain). Interacts with PDZD2. Interacts with RHOA; the interaction is detected at the midbody. Interacts with ECT2; the interaction is detected at the midbody. Interacts with CCDC85B.

The protein resides in the cell junction. The protein localises to the desmosome. Its subcellular location is the cytoplasm. It is found in the cytoskeleton. It localises to the spindle. The protein resides in the spindle pole. The protein localises to the midbody. Its subcellular location is the cell membrane. Functionally, plays a role as a regulator of Rho activity during cytokinesis. May play a role in junctional plaques. The sequence is that of Plakophilin-4 (Pkp4) from Mus musculus (Mouse).